The following is a 289-amino-acid chain: Inorganic pyrophosphatase (289 aa).

Residue R80 participates in diphosphate binding. Mg(2+)-binding residues include D117, D122, and D154.

The protein belongs to the PPase family. Homodimer. The cofactor is Mg(2+).

The protein localises to the cytoplasm. The catalysed reaction is diphosphate + H2O = 2 phosphate + H(+). The protein is Inorganic pyrophosphatase (ppa1) of Schizosaccharomyces pombe (strain 972 / ATCC 24843) (Fission yeast).